Reading from the N-terminus, the 93-residue chain is Putative membrane protein insertion efficiency factor (93 aa).

It belongs to the UPF0161 family.

It localises to the cell inner membrane. Functionally, could be involved in insertion of integral membrane proteins into the membrane. This is Putative membrane protein insertion efficiency factor from Cupriavidus taiwanensis (strain DSM 17343 / BCRC 17206 / CCUG 44338 / CIP 107171 / LMG 19424 / R1) (Ralstonia taiwanensis (strain LMG 19424)).